The chain runs to 212 residues: Glycerol-3-phosphate acyltransferase (212 aa).

The next 5 helical transmembrane spans lie at 5–25 (ALGM…ILVC), 53–73 (VAAA…VWLA), 80–100 (PLYL…PVFF), 112–132 (FGAI…TWLL), and 138–158 (GYSS…VWWF).

The protein belongs to the PlsY family. Probably interacts with PlsX.

The protein localises to the cell inner membrane. The catalysed reaction is an acyl phosphate + sn-glycerol 3-phosphate = a 1-acyl-sn-glycero-3-phosphate + phosphate. It participates in lipid metabolism; phospholipid metabolism. Its function is as follows. Catalyzes the transfer of an acyl group from acyl-phosphate (acyl-PO(4)) to glycerol-3-phosphate (G3P) to form lysophosphatidic acid (LPA). This enzyme utilizes acyl-phosphate as fatty acyl donor, but not acyl-CoA or acyl-ACP. The chain is Glycerol-3-phosphate acyltransferase from Serratia proteamaculans (strain 568).